The primary structure comprises 407 residues: 1-deoxy-D-xylulose 5-phosphate reductoisomerase (407 aa).

NADPH contacts are provided by Thr-25, Gly-26, Ser-27, Ile-28, Asn-53, and Asn-136. Lys-137 is a binding site for 1-deoxy-D-xylulose 5-phosphate. Glu-138 is an NADPH binding site. Asp-162 is a Mn(2+) binding site. The 1-deoxy-D-xylulose 5-phosphate site is built by Ser-163, Glu-164, Ser-188, and His-211. Glu-164 contributes to the Mn(2+) binding site. Gly-217 provides a ligand contact to NADPH. 4 residues coordinate 1-deoxy-D-xylulose 5-phosphate: Ser-224, Asn-229, Lys-230, and Glu-233. Glu-233 contacts Mn(2+).

It belongs to the DXR family. The cofactor is Mg(2+). Mn(2+) is required as a cofactor.

It catalyses the reaction 2-C-methyl-D-erythritol 4-phosphate + NADP(+) = 1-deoxy-D-xylulose 5-phosphate + NADPH + H(+). It functions in the pathway isoprenoid biosynthesis; isopentenyl diphosphate biosynthesis via DXP pathway; isopentenyl diphosphate from 1-deoxy-D-xylulose 5-phosphate: step 1/6. Its function is as follows. Catalyzes the NADPH-dependent rearrangement and reduction of 1-deoxy-D-xylulose-5-phosphate (DXP) to 2-C-methyl-D-erythritol 4-phosphate (MEP). The protein is 1-deoxy-D-xylulose 5-phosphate reductoisomerase of Rhodopseudomonas palustris (strain HaA2).